Here is a 943-residue protein sequence, read N- to C-terminus: UvrABC system protein A (943 aa).

Residue 31-38 (GLSGSGKS) coordinates ATP. Residues 253 to 280 (CPHCGYSVPELEPRLFSFNNPAGACPTC) form a C4-type zinc finger. 2 ABC transporter domains span residues 310 to 587 (WDRR…PNSI) and 607 to 937 (LDKK…RFLK). 640–647 (GVSGSGKS) lines the ATP pocket. The C4-type zinc-finger motif lies at 740–766 (CEACQGDGVLKVEMHFLPDVYVPCDQC).

It belongs to the ABC transporter superfamily. UvrA family. Forms a heterotetramer with UvrB during the search for lesions.

It is found in the cytoplasm. Functionally, the UvrABC repair system catalyzes the recognition and processing of DNA lesions. UvrA is an ATPase and a DNA-binding protein. A damage recognition complex composed of 2 UvrA and 2 UvrB subunits scans DNA for abnormalities. When the presence of a lesion has been verified by UvrB, the UvrA molecules dissociate. This Haemophilus influenzae (strain ATCC 51907 / DSM 11121 / KW20 / Rd) protein is UvrABC system protein A.